The following is a 558-amino-acid chain: MSAHYATEPAPTASATLHTTFGPLHIALFAKQTPLTCRNFLQHCMDNYYAGTIFHRVVPDFIIQGGDPTGTGSGGTSIYEYPEFEYDPDARDPNEKVVLRDEIHSRLRFNRRGLVGMAKSEDGSYGSQFFITLANTERELNGQCTLFGRLEGDSLYNMLKIAEAERIEGTERPVYPVKITSCEVGDLGPFVDKVKKRQVVATGPKTEEKPAAKKKKKAKPGKALLSFGGDDEEDEDMPIRPAKPKFNPMLVTDTKLPEKESSTKGEASQTRKRPRSPSPKRQPQPSAPPKNRPKTPEPTKQLPLPNPESPERSPSPPPKQSFLSRTNAEIENLKASMRRTAHAPAAETKPKSALEAMIPQTAIRGRKRPPPGSVSASTSAPNGITGFSSNSAEAEALKMFNAFRAKLESSDSQPTAAAAKRLSVAKTDAAEERKETPDEDEESQLCDLHFIANCQSCKSWDNDVEGGANNGADDDVNDSGWLNHQLRFGKDTLGKDLNWKREHQDVDTLMVIDPREKEKELADSSRPGTKRVKGRGLERDRERERKKGRVGDLEWSKR.

Residues 11 to 184 form the PPIase cyclophilin-type domain; it reads PTASATLHTT…YPVKITSCEV (174 aa). Disordered stretches follow at residues 201–388, 408–443, and 510–558; these read ATGP…TGFS, ESSD…DEES, and MVID…WSKR. 2 stretches are compositionally biased toward pro residues: residues 276 to 290 and 304 to 319; these read SPSP…APPK and LPNP…PPPK. Residues 374–388 show a composition bias toward polar residues; the sequence is VSASTSAPNGITGFS. Composition is skewed to basic and acidic residues over residues 513-523 and 535-558; these read DPREKEKELAD and RGLE…WSKR.

This sequence belongs to the cyclophilin-type PPIase family. CWC27 subfamily. Associated with the spliceosome.

Its subcellular location is the cytoplasm. The protein resides in the nucleus. The catalysed reaction is [protein]-peptidylproline (omega=180) = [protein]-peptidylproline (omega=0). PPIases accelerate the folding of proteins. It catalyzes the cis-trans isomerization of proline imidic peptide bonds in oligopeptides. Involved in pre-mRNA splicing. The protein is Peptidyl-prolyl isomerase cwc27 (cwc27) of Emericella nidulans (strain FGSC A4 / ATCC 38163 / CBS 112.46 / NRRL 194 / M139) (Aspergillus nidulans).